The following is a 199-amino-acid chain: Protein CPL1 (199 aa).

Residues Met1–Ala30 form the signal peptide. Residues Gly34–Ser58 are disordered. The N-linked (GlcNAc...) asparagine glycan is linked to Asn148.

Its subcellular location is the secreted. Functionally, virulence factor which promotes fungal virulence by enhancing type 2 inflammation in the mouse host. Likely binds mouse Tlr4 independently of Ly96/Md2 and activates Tlr4 signaling to drive Stat3 phosphorylation in interstitial macrophages, which promotes the initial induction of Arg1/arginase-1 and increases macrophage sensitivity to Il4 signaling. This Cryptococcus neoformans var. grubii serotype A (strain H99 / ATCC 208821 / CBS 10515 / FGSC 9487) (Filobasidiella neoformans var. grubii) protein is Protein CPL1.